A 359-amino-acid polypeptide reads, in one-letter code: Stearoyl-CoA desaturase (359 aa).

Residues 1–72 lie on the Cytoplasmic side of the membrane; sequence MPAHLLQDDI…EGPSPKVEYV (72 aa). A helical transmembrane segment spans residues 73-93; the sequence is WRNIILMSLLHLGALYGITLI. Residue N75 participates in substrate binding. The Lumenal portion of the chain corresponds to 94–97; the sequence is PTCK. Residues 98–118 form a helical membrane-spanning segment; that stretch reads FYTWLWGVFYYFVSALGITAG. At 119-217 the chain is on the cytoplasmic side; it reads AHRLWSHRSY…EKLVMFQRRY (99 aa). Fe cation contacts are provided by H120 and H125. The Histidine box-1 motif lies at 120-125; the sequence is HRLWSH. Positions 148, 155, and 156 each coordinate substrate. Positions 157, 160, and 161 each coordinate Fe cation. Positions 157-161 match the Histidine box-2 motif; that stretch reads HRAHH. Positions 188 and 189 each coordinate substrate. 2 positions are modified to phosphoserine: S198 and S203. A helical membrane pass occupies residues 218 to 237; the sequence is YKPGLLMMCFILPTLVPWYF. At 238 to 241 the chain is on the lumenal side; sequence WGET. Residues 242 to 263 traverse the membrane as a helical segment; it reads FQNSVFVATFLRYAVVLNATWL. W262 is a binding site for substrate. The Cytoplasmic portion of the chain corresponds to 264-359; the sequence is VNSAAHLFGY…RTGDGNYKSG (96 aa). Fe cation contacts are provided by H269, H298, H301, and H302. The Histidine box-3 signature appears at 298 to 302; the sequence is HNYHH.

The protein belongs to the fatty acid desaturase type 1 family. May self-associate and form homodimers. Requires Fe(2+) as cofactor. As to expression, detected in fetal liver, lung and brain. Highly expressed in adult adipose tissue, and at lower levels in adult brain and lung.

Its subcellular location is the endoplasmic reticulum membrane. It carries out the reaction octadecanoyl-CoA + 2 Fe(II)-[cytochrome b5] + O2 + 2 H(+) = (9Z)-octadecenoyl-CoA + 2 Fe(III)-[cytochrome b5] + 2 H2O. It catalyses the reaction hexadecanoyl-CoA + 2 Fe(II)-[cytochrome b5] + O2 + 2 H(+) = (9Z)-hexadecenoyl-CoA + 2 Fe(III)-[cytochrome b5] + 2 H2O. Functionally, stearoyl-CoA desaturase that utilizes O(2) and electrons from reduced cytochrome b5 to introduce the first double bond into saturated fatty acyl-CoA substrates. Catalyzes the insertion of a cis double bond at the delta-9 position into fatty acyl-CoA substrates including palmitoyl-CoA and stearoyl-CoA. Gives rise to a mixture of 16:1 and 18:1 unsaturated fatty acids. Plays an important role in lipid biosynthesis. Plays an important role in regulating the expression of genes that are involved in lipogenesis and in regulating mitochondrial fatty acid oxidation. Plays an important role in body energy homeostasis. Contributes to the biosynthesis of membrane phospholipids, cholesterol esters and triglycerides. The sequence is that of Stearoyl-CoA desaturase (SCD) from Homo sapiens (Human).